Reading from the N-terminus, the 212-residue chain is Kynurenine formamidase (212 aa).

Tryptophan 17 serves as a coordination point for substrate. Zn(2+) is bound by residues histidine 48, histidine 52, and aspartate 54. The active-site Proton donor/acceptor is the histidine 58. Zn(2+)-binding residues include histidine 161 and glutamate 173.

The protein belongs to the Cyclase 1 superfamily. KynB family. In terms of assembly, homodimer. It depends on Zn(2+) as a cofactor.

The catalysed reaction is N-formyl-L-kynurenine + H2O = L-kynurenine + formate + H(+). The protein operates within amino-acid degradation; L-tryptophan degradation via kynurenine pathway; L-kynurenine from L-tryptophan: step 2/2. Its function is as follows. Catalyzes the hydrolysis of N-formyl-L-kynurenine to L-kynurenine, the second step in the kynurenine pathway of tryptophan degradation. The polypeptide is Kynurenine formamidase (Salinibacter ruber (strain DSM 13855 / M31)).